Consider the following 190-residue polypeptide: Elongation factor P 2 (190 aa).

Belongs to the elongation factor P family.

The protein localises to the cytoplasm. The protein operates within protein biosynthesis; polypeptide chain elongation. Functionally, involved in peptide bond synthesis. Stimulates efficient translation and peptide-bond synthesis on native or reconstituted 70S ribosomes in vitro. Probably functions indirectly by altering the affinity of the ribosome for aminoacyl-tRNA, thus increasing their reactivity as acceptors for peptidyl transferase. The polypeptide is Elongation factor P 2 (efp2) (Protochlamydia amoebophila (strain UWE25)).